The following is an 82-amino-acid chain: Histidine-rich protein (82 aa).

The protein is Histidine-rich protein of Plasmodium falciparum (isolate fcm17 / Senegal).